A 164-amino-acid polypeptide reads, in one-letter code: ATP synthase subunit b 1 (164 aa).

Residues 8 to 28 traverse the membrane as a helical segment; sequence PETWVAVAFVILMGVFAYFGV.

The protein belongs to the ATPase B chain family. F-type ATPases have 2 components, F(1) - the catalytic core - and F(0) - the membrane proton channel. F(1) has five subunits: alpha(3), beta(3), gamma(1), delta(1), epsilon(1). F(0) has three main subunits: a(1), b(2) and c(10-14). The alpha and beta chains form an alternating ring which encloses part of the gamma chain. F(1) is attached to F(0) by a central stalk formed by the gamma and epsilon chains, while a peripheral stalk is formed by the delta and b chains.

It localises to the cell inner membrane. Functionally, f(1)F(0) ATP synthase produces ATP from ADP in the presence of a proton or sodium gradient. F-type ATPases consist of two structural domains, F(1) containing the extramembraneous catalytic core and F(0) containing the membrane proton channel, linked together by a central stalk and a peripheral stalk. During catalysis, ATP synthesis in the catalytic domain of F(1) is coupled via a rotary mechanism of the central stalk subunits to proton translocation. Component of the F(0) channel, it forms part of the peripheral stalk, linking F(1) to F(0). This chain is ATP synthase subunit b 1, found in Rhodopseudomonas palustris (strain BisB18).